A 1159-amino-acid chain; its full sequence is RAD51-associated protein 2 (1159 aa).

Positions 1–35 are disordered; that stretch reads MSLPQPTPRMAELRKPTSSLTPPEDPDSQPPSSKR. Residues 1111 to 1159 are interaction with RAD51; that stretch reads SHFPHGISRVRPLKTCSRPIRIGLSRKARIKQLHPYLKQMCYGNLKENF.

As to quaternary structure, interacts with RAD51. Specifically expressed in meiotic tissues. Highly expressed in testis.

This Homo sapiens (Human) protein is RAD51-associated protein 2 (RAD51AP2).